A 414-amino-acid polypeptide reads, in one-letter code: Esterase FrsA (414 aa).

This sequence belongs to the FrsA family.

It carries out the reaction a carboxylic ester + H2O = an alcohol + a carboxylate + H(+). Functionally, catalyzes the hydrolysis of esters. This Escherichia coli O6:K15:H31 (strain 536 / UPEC) protein is Esterase FrsA.